The following is a 407-amino-acid chain: Na(+)-translocating NADH-quinone reductase subunit F (407 aa).

A helical membrane pass occupies residues 3–23 (ITLGIAMFTVIVLALAVLILF). The 2Fe-2S ferredoxin-type domain maps to 32 to 126 (GDITIEINDD…SMKIELPEEV (95 aa)). Residues C69, C75, C78, and C110 each contribute to the [2Fe-2S] cluster site. One can recognise an FAD-binding FR-type domain in the interval 129 to 269 (VKKWECTVIS…SGPFGEFFAK (141 aa)).

The protein belongs to the NqrF family. Composed of six subunits; NqrA, NqrB, NqrC, NqrD, NqrE and NqrF. Requires [2Fe-2S] cluster as cofactor. It depends on FAD as a cofactor.

It is found in the cell inner membrane. The enzyme catalyses a ubiquinone + n Na(+)(in) + NADH + H(+) = a ubiquinol + n Na(+)(out) + NAD(+). Its function is as follows. NQR complex catalyzes the reduction of ubiquinone-1 to ubiquinol by two successive reactions, coupled with the transport of Na(+) ions from the cytoplasm to the periplasm. The first step is catalyzed by NqrF, which accepts electrons from NADH and reduces ubiquinone-1 to ubisemiquinone by a one-electron transfer pathway. The polypeptide is Na(+)-translocating NADH-quinone reductase subunit F (Histophilus somni (strain 129Pt) (Haemophilus somnus)).